The sequence spans 57 residues: uncharacterized protein (57 aa).

Transmembrane regions (helical) follow at residues 2 to 22 (LLVV…LRSV) and 29 to 49 (GFLL…MTVI).

Its subcellular location is the cell membrane. This is an uncharacterized protein from Bacillus subtilis (strain 168).